The sequence spans 772 residues: Acetamidase regulatory protein (772 aa).

A compositionally biased stretch (polar residues) spans 1–16 (MSSTAQKNSLSPTGNG). A disordered region spans residues 1 to 23 (MSSTAQKNSLSPTGNGVTKRKSG). Positions 26–59 (ACVHCHRRKVRCDARIVGLPCSNCRSSGKTDCRI) form a DNA-binding region, zn(2)-C6 fungal-type. Disordered regions lie at residues 78-99 (RCRP…TISE), 114-148 (AAAP…QECH), and 627-690 (ATSE…QTAV). A compositionally biased stretch (low complexity) spans 114–123 (AAAPPASVAP). Composition is skewed to polar residues over residues 124 to 144 (NVQS…SPQA) and 634 to 658 (PFSS…QHSS). Low complexity predominate over residues 671–686 (LLPSYDSPTPDSTSLP).

It localises to the nucleus. Its function is as follows. Positively regulates the expression of genes involved in the catabolism of certain amides, omega amino acids, and lactams. This Aspergillus fumigatus (strain ATCC MYA-4609 / CBS 101355 / FGSC A1100 / Af293) (Neosartorya fumigata) protein is Acetamidase regulatory protein (amdR).